A 416-amino-acid chain; its full sequence is Formyl-CoA:oxalate CoA-transferase (416 aa).

CoA is bound by residues 17 to 18 (QS), R38, 72 to 75 (LNTK), 96 to 98 (NFH), H104, and 137 to 140 (KAYE). D169 serves as the catalytic Nucleophile. 248–250 (GGQ) lines the substrate pocket. CoA is bound at residue 273-275 (QEQ).

This sequence belongs to the CoA-transferase III family. Frc subfamily. As to quaternary structure, homodimer.

It catalyses the reaction formyl-CoA + oxalate = oxalyl-CoA + formate. It participates in metabolic intermediate degradation; oxalate degradation; CO(2) and formate from oxalate: step 1/2. Functionally, involved in the catabolism of oxalate and in the adapatation to low pH via the induction of the oxalate-dependent acid tolerance response (ATR). Catalyzes the transfer of the CoA moiety from formyl-CoA to oxalate. The polypeptide is Formyl-CoA:oxalate CoA-transferase (Shigella sonnei (strain Ss046)).